Here is a 118-residue protein sequence, read N- to C-terminus: Large ribosomal subunit protein uL18 (118 aa).

Belongs to the universal ribosomal protein uL18 family. Part of the 50S ribosomal subunit; part of the 5S rRNA/L5/L18/L25 subcomplex. Contacts the 5S and 23S rRNAs.

This is one of the proteins that bind and probably mediate the attachment of the 5S RNA into the large ribosomal subunit, where it forms part of the central protuberance. The sequence is that of Large ribosomal subunit protein uL18 from Helicobacter pylori (strain J99 / ATCC 700824) (Campylobacter pylori J99).